The primary structure comprises 140 residues: Large ribosomal subunit protein uL11 (140 aa).

It belongs to the universal ribosomal protein uL11 family. As to quaternary structure, part of the ribosomal stalk of the 50S ribosomal subunit. Interacts with L10 and the large rRNA to form the base of the stalk. L10 forms an elongated spine to which L12 dimers bind in a sequential fashion forming a multimeric L10(L12)X complex. In terms of processing, one or more lysine residues are methylated.

Functionally, forms part of the ribosomal stalk which helps the ribosome interact with GTP-bound translation factors. In Desulfatibacillum aliphaticivorans, this protein is Large ribosomal subunit protein uL11.